The following is a 457-amino-acid chain: Cysteine--tRNA ligase (457 aa).

C28 is a Zn(2+) binding site. Residues 30–40 (MTVYDYCHLGH) carry the 'HIGH' region motif. Zn(2+)-binding residues include C209, H234, and E238. Residues 266–270 (KMSKS) carry the 'KMSKS' region motif. K269 is a binding site for ATP.

Belongs to the class-I aminoacyl-tRNA synthetase family. As to quaternary structure, monomer. Requires Zn(2+) as cofactor.

The protein resides in the cytoplasm. The catalysed reaction is tRNA(Cys) + L-cysteine + ATP = L-cysteinyl-tRNA(Cys) + AMP + diphosphate. In Laribacter hongkongensis (strain HLHK9), this protein is Cysteine--tRNA ligase.